The primary structure comprises 361 residues: Peptide chain release factor 1 (361 aa).

Glutamine 237 is modified (N5-methylglutamine). A compositionally biased stretch (basic and acidic residues) spans 287–297 (KQQKEQSDTRK). The disordered stretch occupies residues 287-307 (KQQKEQSDTRKNLVGSGDRSE).

Belongs to the prokaryotic/mitochondrial release factor family. Methylated by PrmC. Methylation increases the termination efficiency of RF1.

The protein resides in the cytoplasm. Peptide chain release factor 1 directs the termination of translation in response to the peptide chain termination codons UAG and UAA. This Francisella philomiragia subsp. philomiragia (strain ATCC 25017 / CCUG 19701 / FSC 153 / O#319-036) protein is Peptide chain release factor 1.